The following is a 187-amino-acid chain: MKIGKLNSIVMVLFFDLLVACSIGLVERTNAALESSSKDLKNKILKIKKEATGKGVLFEAFTGLKTGSKVTSGGLALREAKVQAIVETGKFLKIIEEEALKLKETGNSGQFLAMFDLMLEVVESLEDVGIIGLKARVLEESKNNPINTAERLLAAKAQIENQLKVVKEKQNIENGGEKKNNKSKKKK.

A signal peptide spans 1–20 (MKIGKLNSIVMVLFFDLLVA).

It belongs to the decorin-binding protein family.

Binds to decorin which may mediate the adherence of B.burgdorferi to collagen fibers in skin and other tissues. The sequence is that of Decorin-binding protein B (dbpB) from Borreliella burgdorferi (strain N40) (Borrelia burgdorferi).